A 444-amino-acid chain; its full sequence is D(2) dopamine receptor (444 aa).

The Extracellular segment spans residues 1–37; the sequence is MDPLNLSWYDDDLERQNWSRPFNGSEGKPDRPHYNYY. N-linked (GlcNAc...) asparagine glycosylation is found at Asn5, Asn17, and Asn23. A helical membrane pass occupies residues 38–60; that stretch reads AMLLTLLIFIIVFGNVLVCMAVS. At 61 to 70 the chain is on the cytoplasmic side; that stretch reads REKALQTTTN. A helical transmembrane segment spans residues 71 to 93; that stretch reads YLIVSLAVADLLVATLVMPWVVY. Residues 94-108 lie on the Extracellular side of the membrane; the sequence is LEVVGEWKFSRIHCD. Cys107 and Cys182 are disulfide-bonded. The helical transmembrane segment at 109–130 threads the bilayer; the sequence is IFVTLDVMMCTASILNLCAISI. The Cytoplasmic segment spans residues 131–151; it reads DRYTAVAMPMLYNTRYSSKRR. The helical transmembrane segment at 152–172 threads the bilayer; the sequence is VTVMIAIVWVLSFTISCPLLF. Over 173-188 the chain is Extracellular; the sequence is GLNNTDQNECIIANPA. Residues 189 to 213 traverse the membrane as a helical segment; the sequence is FVVYSSIVSFYVPFIVTLLVYIKIY. Residues 211-374 are interaction with PPP1R9B; the sequence is KIYIVLRKRR…SQQKEKKATQ (164 aa). The Cytoplasmic portion of the chain corresponds to 214-374; that stretch reads IVLRKRRKRV…SQQKEKKATQ (161 aa). Residues 282–329 are disordered; sequence EMLSSTSPPERTRYSPIPPSHHQLTLPDPSHHGLHSNPDSPAKPEKNG. A helical transmembrane segment spans residues 375–396; sequence MLAIVLGVFIICWLPFFITHIL. At 397-410 the chain is on the extracellular side; it reads NIHCDCNIPPVLYS. An intrachain disulfide couples Cys400 to Cys402. Residues 411 to 432 traverse the membrane as a helical segment; that stretch reads AFTWLGYVNSAVNPIIYTTFNI. The Cytoplasmic portion of the chain corresponds to 433-444; it reads EFRKAFMKILHC. A lipid anchor (S-palmitoyl cysteine) is attached at Cys444.

It belongs to the G-protein coupled receptor 1 family. As to quaternary structure, forms homo- and heterooligomers with DRD4. The interaction with DRD4 may modulate agonist-induced downstream signaling. Interacts with CADPS and CADPS2. Interacts with GPRASP1, PPP1R9B and CLIC6. Interacts with ARRB2. Interacts with HTR2A. Interacts with DRD1. In terms of assembly, interacts with KCNA2. Palmitoylated. Palmitoylation which is required for proper localization to the plasma membrane and stability of the receptor could be carried on by ZDHHC4, ZDHHC3 and ZDHHC8. Expressed in retinal hyaloid vessels at postnatal day 6. As to expression, expressed in the pituitary gland, stratum, brain stem and cortex. In terms of tissue distribution, expressed in the brain stem.

The protein localises to the cell membrane. Its subcellular location is the golgi apparatus membrane. Dopamine receptor whose activity is mediated by G proteins which inhibit adenylyl cyclase. Positively regulates postnatal regression of retinal hyaloid vessels via suppression of VEGFR2/KDR activity, downstream of OPN5. The chain is D(2) dopamine receptor (Drd2) from Mus musculus (Mouse).